The chain runs to 303 residues: Monoglyceride lipase (303 aa).

Thr-10 carries the post-translational modification Phosphothreonine. Tyr-58 carries the 3'-nitrotyrosine modification. The active-site Nucleophile is Ser-122. Ser-189 bears the Phosphoserine mark. Residues Asp-239 and His-269 each act as charge relay system in the active site.

Belongs to the AB hydrolase superfamily. Monoacylglycerol lipase family. In terms of assembly, homodimer. As to expression, ubiquitous.

The protein localises to the cytoplasm. It is found in the cytosol. The protein resides in the membrane. It carries out the reaction Hydrolyzes glycerol monoesters of long-chain fatty acids.. The enzyme catalyses a 1-acylglycerol + H2O = glycerol + a fatty acid + H(+). The catalysed reaction is a 2-acylglycerol + H2O = glycerol + a fatty acid + H(+). It catalyses the reaction 2-(5Z,8Z,11Z,14Z-eicosatetraenoyl)-glycerol + H2O = glycerol + (5Z,8Z,11Z,14Z)-eicosatetraenoate + H(+). It carries out the reaction 1-octanoylglycerol + H2O = octanoate + glycerol + H(+). The enzyme catalyses 1-decanoylglycerol + H2O = decanoate + glycerol + H(+). The catalysed reaction is 1-dodecanoylglycerol + H2O = dodecanoate + glycerol + H(+). It catalyses the reaction 1-tetradecanoylglycerol + H2O = tetradecanoate + glycerol + H(+). It carries out the reaction 2-hexadecanoylglycerol + H2O = glycerol + hexadecanoate + H(+). The enzyme catalyses 1-(9Z-octadecenoyl)-glycerol + H2O = glycerol + (9Z)-octadecenoate + H(+). The catalysed reaction is 2-(9Z-octadecenoyl)-glycerol + H2O = glycerol + (9Z)-octadecenoate + H(+). It catalyses the reaction 2-(9Z,12Z-octadecadienoyl)-glycerol + H2O = (9Z,12Z)-octadecadienoate + glycerol + H(+). It carries out the reaction 1-(5Z,8Z,11Z,14Z-eicosatetraenoyl)-glycerol + H2O = glycerol + (5Z,8Z,11Z,14Z)-eicosatetraenoate + H(+). The enzyme catalyses 1-(9Z,12Z-octadecadienoyl)-glycerol + H2O = (9Z,12Z)-octadecadienoate + glycerol + H(+). The catalysed reaction is 1-hexadecanoylglycerol + H2O = glycerol + hexadecanoate + H(+). It catalyses the reaction 1-octadecanoylglycerol + H2O = octadecanoate + glycerol + H(+). It carries out the reaction prostaglandin E2 1-glyceryl ester + H2O = prostaglandin E2 + glycerol + H(+). The enzyme catalyses prostaglandin D2-1-glycerol ester + H2O = prostaglandin D2 + glycerol + H(+). The catalysed reaction is 2-glyceryl-15-deoxy-Delta(12,14)-prostaglandin J2 + H2O = 15-deoxy-Delta(12,14)-prostaglandin J2 + glycerol + H(+). It catalyses the reaction prostaglandin F2alpha 1-glyceryl ester + H2O = prostaglandin F2alpha + glycerol + H(+). It functions in the pathway glycerolipid metabolism; triacylglycerol degradation. Converts monoacylglycerides to free fatty acids and glycerol. Hydrolyzes the endocannabinoid 2-arachidonoylglycerol, and thereby contributes to the regulation of endocannabinoid signaling, nociperception and perception of pain. Regulates the levels of fatty acids that serve as signaling molecules and promote cancer cell migration, invasion and tumor growth. The protein is Monoglyceride lipase of Mus musculus (Mouse).